Consider the following 344-residue polypeptide: Tripartite motif-containing protein 44 (344 aa).

A disordered region spans residues 69–165 (PPASGDDALP…ETEAESEFDP (97 aa)). Residues 88–165 (EGEVESEVGE…ETEAESEFDP (78 aa)) show a composition bias toward acidic residues. A B box-type zinc finger spans residues 174 to 215 (VAKRKCPDHGLDLSTYCQEDRQLICVLCPVIGAHRGHQLSTL). Residues C179, H182, C201, and H207 each contribute to the Zn(2+) site. Residues 290–325 (AHVTEILADIQSHMDRLMTQMAQAKEQLDTSNESAE) adopt a coiled-coil conformation. The tract at residues 309–344 (QMAQAKEQLDTSNESAEPKAEGDEEGPSGASEEEDT) is disordered. Residues 330–344 (GDEEGPSGASEEEDT) are compositionally biased toward acidic residues. S336 and S339 each carry phosphoserine.

Interacts (via coiled coil) with TRIM17 (via coiled coil).

Its function is as follows. May play a role in the process of differentiation and maturation of neuronal cells. May regulate the activity of TRIM17. Is a negative regulator of PAX6 expression. The polypeptide is Tripartite motif-containing protein 44 (Trim44) (Rattus norvegicus (Rat)).